Here is a 117-residue protein sequence, read N- to C-terminus: Cell division protein FtsL (117 aa).

Over 1–35 the chain is Cytoplasmic; that stretch reads MSNLAYQPEKQQRHAISPEKKVIVKKRASITLGEK. A helical membrane pass occupies residues 36–56; it reads VLLVLFAAAVLSVSLLIVSKA. The Extracellular segment spans residues 57-117; it reads YAAYQTNIEV…KDKKVKNIQE (61 aa).

This sequence belongs to the FtsL family. As to quaternary structure, monomer. Interacts with DivIB and DivIC. Interaction with DivIC stabilizes FtsL against RasP cleavage. Cleaved by RasP. Cleavage is important for turnover and function of FtsL.

It localises to the cell membrane. In terms of biological role, essential cell division protein that may play a structural role. Probably involved in the regulation of the timing of cell division. Also required for sporulation. This is Cell division protein FtsL from Bacillus subtilis (strain 168).